Consider the following 990-residue polypeptide: Bacteriophage adsorption protein A (990 aa).

An N-terminal signal peptide occupies residues 1 to 27; it reads MKENNLNRVIGWSGLLLTSLLSTSALA. TPR repeat units lie at residues 81–114, 612–645, and 646–679; these read IPLT…HPGD, ANAY…EPNN, and SNTQ…LPDD.

In terms of assembly, (Microbial infection) Interacts with N4 phage non-contractile sheath protein; this interaction is essential for viral adsorption to the host.

It localises to the cell outer membrane. In terms of biological role, (Microbial infection) Allows N4 phage attachment by binding to the viral non-contractile sheath protein. The sequence is that of Bacteriophage adsorption protein A (nfrA) from Escherichia coli (strain K12).